The primary structure comprises 299 residues: N-acetylneuraminate lyase (299 aa).

Serine 45 and serine 46 together coordinate aceneuramate. Residue tyrosine 134 is the Proton donor of the active site. Lysine 161 serves as the catalytic Schiff-base intermediate with substrate. 4 residues coordinate aceneuramate: threonine 163, glycine 185, aspartate 187, and glutamate 188.

The protein belongs to the DapA family. NanA subfamily. Homotetramer.

It localises to the cytoplasm. The catalysed reaction is aceneuramate = aldehydo-N-acetyl-D-mannosamine + pyruvate. Its pathway is amino-sugar metabolism; N-acetylneuraminate degradation; D-fructose 6-phosphate from N-acetylneuraminate: step 1/5. Catalyzes the reversible aldol cleavage of N-acetylneuraminic acid (sialic acid; Neu5Ac) to form pyruvate and N-acetylmannosamine (ManNAc) via a Schiff base intermediate. The chain is N-acetylneuraminate lyase from Rhizobium meliloti (strain 1021) (Ensifer meliloti).